Consider the following 224-residue polypeptide: Peroxiredoxin-6 (224 aa).

The Thioredoxin domain maps to 5-169 (LLLGDEAPNF…ILRVVDSLQL (165 aa)). Residues 31–40 (DSWGILFSHP) are required and sufficient for targeting to lysosomes and lamellar bodies. Thr44 carries the phosphothreonine modification. Cys47 functions as the Cysteine sulfenic acid (-SOH) intermediate; for peroxidase activity in the catalytic mechanism. N6-acetyllysine is present on Lys63. Tyr89 is modified (phosphotyrosine). The active-site For phospholipase activity is Asp140. A Phosphothreonine; by MAPK modification is found at Thr177. Lys209 carries the post-translational modification N6-acetyllysine; alternate. Lys209 is subject to N6-succinyllysine; alternate.

Belongs to the peroxiredoxin family. Prx6 subfamily. Homodimer. Interacts with GSTP1; mediates PRDX6 glutathionylation and regeneration. Interacts with APEX1. Interacts with STH. May interact with FAM168B. May interact with HTR2A. Post-translationally, phosphorylation at Thr-177 by MAP kinases increases the phospholipase activity of the enzyme. Phosphorylated form exhibits a greater lysophosphatidylcholine acyltransferase activity compared to the non-phosphorylated form. In terms of processing, irreversibly inactivated by overoxidation of Cys-47 to sulfinic acid (Cys-SO(2)H) and sulfonic acid (Cys-SO(3)H) forms upon oxidative stress.

It is found in the cytoplasm. The protein localises to the lysosome. It carries out the reaction a hydroperoxide + 2 glutathione = an alcohol + glutathione disulfide + H2O. The enzyme catalyses a 1,2-diacyl-sn-glycero-3-phosphocholine + H2O = a 1-acyl-sn-glycero-3-phosphocholine + a fatty acid + H(+). The catalysed reaction is a 1-acyl-sn-glycero-3-phosphocholine + an acyl-CoA = a 1,2-diacyl-sn-glycero-3-phosphocholine + CoA. It catalyses the reaction 1-hexadecanoyl-sn-glycero-3-phosphocholine + hexadecanoyl-CoA = 1,2-dihexadecanoyl-sn-glycero-3-phosphocholine + CoA. It carries out the reaction 1,2-dihexadecanoyl-sn-glycero-3-phosphocholine + H2O = 1-hexadecanoyl-sn-glycero-3-phosphocholine + hexadecanoate + H(+). In terms of biological role, thiol-specific peroxidase that catalyzes the reduction of hydrogen peroxide and organic hydroperoxides to water and alcohols, respectively. Can reduce H(2)O(2) and short chain organic, fatty acid, and phospholipid hydroperoxides. Also has phospholipase activity, can therefore either reduce the oxidized sn-2 fatty acyl group of phospholipids (peroxidase activity) or hydrolyze the sn-2 ester bond of phospholipids (phospholipase activity). These activities are dependent on binding to phospholipids at acidic pH and to oxidized phospholipds at cytosolic pH. Plays a role in cell protection against oxidative stress by detoxifying peroxides and in phospholipid homeostasis. Exhibits acyl-CoA-dependent lysophospholipid acyltransferase which mediates the conversion of lysophosphatidylcholine (1-acyl-sn-glycero-3-phosphocholine or LPC) into phosphatidylcholine (1,2-diacyl-sn-glycero-3-phosphocholine or PC). Shows a clear preference for LPC as the lysophospholipid and for palmitoyl CoA as the fatty acyl substrate. The polypeptide is Peroxiredoxin-6 (Prdx6) (Rattus norvegicus (Rat)).